The primary structure comprises 868 residues: DNA mismatch repair protein MutS (868 aa).

620 to 627 is a binding site for ATP; that stretch reads GPNMSGKS.

It belongs to the DNA mismatch repair MutS family.

In terms of biological role, this protein is involved in the repair of mismatches in DNA. It is possible that it carries out the mismatch recognition step. This protein has a weak ATPase activity. This chain is DNA mismatch repair protein MutS, found in Flavobacterium johnsoniae (strain ATCC 17061 / DSM 2064 / JCM 8514 / BCRC 14874 / CCUG 350202 / NBRC 14942 / NCIMB 11054 / UW101) (Cytophaga johnsonae).